A 207-amino-acid chain; its full sequence is ATP-dependent Clp protease proteolytic subunit (207 aa).

The active-site Nucleophile is the Ser-111. The active site involves His-136.

It belongs to the peptidase S14 family. In terms of assembly, fourteen ClpP subunits assemble into 2 heptameric rings which stack back to back to give a disk-like structure with a central cavity, resembling the structure of eukaryotic proteasomes.

Its subcellular location is the cytoplasm. The catalysed reaction is Hydrolysis of proteins to small peptides in the presence of ATP and magnesium. alpha-casein is the usual test substrate. In the absence of ATP, only oligopeptides shorter than five residues are hydrolyzed (such as succinyl-Leu-Tyr-|-NHMec, and Leu-Tyr-Leu-|-Tyr-Trp, in which cleavage of the -Tyr-|-Leu- and -Tyr-|-Trp bonds also occurs).. Its function is as follows. Cleaves peptides in various proteins in a process that requires ATP hydrolysis. Has a chymotrypsin-like activity. Plays a major role in the degradation of misfolded proteins. The chain is ATP-dependent Clp protease proteolytic subunit from Psychromonas ingrahamii (strain DSM 17664 / CCUG 51855 / 37).